Here is a 273-residue protein sequence, read N- to C-terminus: Large ribosomal subunit protein uL2 (273 aa).

Disordered stretches follow at residues 34 to 54 (LEKK…TRHI) and 223 to 273 (VAMN…RRRK).

The protein belongs to the universal ribosomal protein uL2 family. As to quaternary structure, part of the 50S ribosomal subunit. Forms a bridge to the 30S subunit in the 70S ribosome.

In terms of biological role, one of the primary rRNA binding proteins. Required for association of the 30S and 50S subunits to form the 70S ribosome, for tRNA binding and peptide bond formation. It has been suggested to have peptidyltransferase activity; this is somewhat controversial. Makes several contacts with the 16S rRNA in the 70S ribosome. The polypeptide is Large ribosomal subunit protein uL2 (Pseudomonas aeruginosa (strain LESB58)).